The chain runs to 261 residues: 5-oxoprolinase subunit A (261 aa).

It belongs to the LamB/PxpA family. In terms of assembly, forms a complex composed of PxpA, PxpB and PxpC.

It catalyses the reaction 5-oxo-L-proline + ATP + 2 H2O = L-glutamate + ADP + phosphate + H(+). Functionally, catalyzes the cleavage of 5-oxoproline to form L-glutamate coupled to the hydrolysis of ATP to ADP and inorganic phosphate. The protein is 5-oxoprolinase subunit A of Coprothermobacter proteolyticus (strain ATCC 35245 / DSM 5265 / OCM 4 / BT).